Consider the following 524-residue polypeptide: Putative cysteine ligase BshC (524 aa).

Positions Ala-437–Lys-457 form a coiled coil.

It belongs to the BshC family.

The polypeptide is Putative cysteine ligase BshC (Solibacter usitatus (strain Ellin6076)).